Reading from the N-terminus, the 295-residue chain is Adrenocorticotropic hormone receptor (295 aa).

Over 1 to 23 the chain is Extracellular; the sequence is MRHILNLYENINSTARNNSDCPA. N-linked (GlcNAc...) asparagine glycosylation is found at asparagine 12 and asparagine 17. Disulfide bonds link cysteine 21-cysteine 253 and cysteine 245-cysteine 251. A helical membrane pass occupies residues 24 to 49; the sequence is VILPEEIFFTVSIVGVLENLMVLLAV. Topologically, residues 50-58 are cytoplasmic; the sequence is AKNKSLQSP. Residues 59–79 form a helical membrane-spanning segment; the sequence is MYFFICSLAISDMLGSLYKIL. The Extracellular segment spans residues 80–104; that stretch reads ENVLIMFRNMGYLEPRGSFESTADD. The helical transmembrane segment at 105–126 threads the bilayer; that stretch reads VVDSLFILSLLGSICSLSVIAA. At 127-147 the chain is on the cytoplasmic side; the sequence is DRYITIFHALQYHSIVTMHRA. A helical transmembrane segment spans residues 148–168; it reads LVVLTVLWAGCTGSGITIVTF. The Extracellular portion of the chain corresponds to 169–180; the sequence is SHHVPTVIAFTA. Residues 181-199 form a helical membrane-spanning segment; the sequence is LFPLMLAFILCLYVHMFLL. Topologically, residues 200 to 217 are cytoplasmic; that stretch reads ARSHARRTSSLPKANMRG. A helical transmembrane segment spans residues 218-244; sequence AITLTVLLGVFIFCWAPFVLHVLLMTF. Topologically, residues 245-256 are extracellular; sequence CPADPYCACYMS. Residues 257 to 278 traverse the membrane as a helical segment; the sequence is LFQVNGVLIMCNAVIDPFIYAF. The Cytoplasmic portion of the chain corresponds to 279-295; it reads RSPELRVAFKKMVICNW. Residue cysteine 293 is the site of S-palmitoyl cysteine attachment.

Belongs to the G-protein coupled receptor 1 family. Homodimer. Interacts with corticotropin (ACTH). Interacts with MRAP; this interaction targets MC2R to the plasma membrane. Interacts with MRAP2; competing with MRAP for binding to MC2R and impairing the binding of corticotropin (ACTH). Post-translationally, ubiquitinated by MGRN1 that may be involved in post-endocytic trafficking and/or degradation of internalized receptor.

The protein resides in the cell membrane. Its function is as follows. Hormone receptor primarily expressed in adrenal cortex that plays a key role in regulating adrenocortical function. Upon corticotropin (ACTH) binding, facilitates the release of adrenal glucocorticoids, including cortisol and corticosterone. In addition, MC2R is required for fetal and neonatal adrenal gland development. Mechanistically, activates adenylate cyclase (cAMP), the MAPK cascade as well as the cAMP-dependent protein kinase A pathway leading to steroidogenic factor 1/NR5A1-mediated transcriptional activation. This chain is Adrenocorticotropic hormone receptor (MC2R), found in Ovis aries (Sheep).